A 453-amino-acid chain; its full sequence is 3-phosphoshikimate 1-carboxyvinyltransferase (453 aa).

3-phosphoshikimate is bound by residues K28, S29, and R33. Residue K28 participates in phosphoenolpyruvate binding. Phosphoenolpyruvate is bound by residues G101 and R129. 4 residues coordinate 3-phosphoshikimate: S174, Q176, D326, and K353. Residue Q176 coordinates phosphoenolpyruvate. D326 functions as the Proton acceptor in the catalytic mechanism. Phosphoenolpyruvate-binding residues include R357 and R405.

Belongs to the EPSP synthase family. As to quaternary structure, monomer.

It localises to the cytoplasm. It carries out the reaction 3-phosphoshikimate + phosphoenolpyruvate = 5-O-(1-carboxyvinyl)-3-phosphoshikimate + phosphate. Its pathway is metabolic intermediate biosynthesis; chorismate biosynthesis; chorismate from D-erythrose 4-phosphate and phosphoenolpyruvate: step 6/7. Functionally, catalyzes the transfer of the enolpyruvyl moiety of phosphoenolpyruvate (PEP) to the 5-hydroxyl of shikimate-3-phosphate (S3P) to produce enolpyruvyl shikimate-3-phosphate and inorganic phosphate. This is 3-phosphoshikimate 1-carboxyvinyltransferase from Zymomonas mobilis subsp. mobilis (strain ATCC 31821 / ZM4 / CP4).